We begin with the raw amino-acid sequence, 2092 residues long: MGSIESDSVLSFFSQRCCQNPDNTAIDDGPNGKLSYSQLDQQSSALAYCLQQNGITAGQVIPLLTTSRLEMVIAVLGILKAGGVYVPIDVDQWPADRINYVLSRTCSGLVVYTGDNIPSGVSLEEECRTVQVQIWPESALETQYEPNRRPQLMCIIFTSGTTDKPKGVMIPHSSVARFVTSPGFNYDIVPGDRLLLVLSVAFDGMGTLFNTICNGGTVILANRLNFQERSRQCTVLVVTPSILDVLSPPQSPSDYPSLERIFLGGETPSQQLLEAWSAFNDVALWIAYGPTEATCAVLSGRLQASSETGKFHPTRLGHCIPGSNVLLLTEEMETVQDRDTEGEICIEGPCLTDGYWQDENRTKDRFIEYQGRRVYRTGDLGRFVTTEDSETAIEFCGRRDRVTKIRGFLVNLELDVDAGLRRLDQNITAVFSVVLDKKLCTAVVPSSVDCRHLQAAWRLVAPPYLVPDKMVALNDLPLTANGKFDPRQVISILRDVMQKDAIMQNSISHDNPDANNRKQYSWHSGPLTIGQAILIGIQQVLGVSQGEINLKDSAVFQGVHSLAAAKLSTFCRHHGYNVSVESILTEPSLHSLIEKSRHETEDTPDSSAFATRTPEESSMPTQGPVTPLQKRMVLDSIVEDPRANCLQHISWYKMEDIGRLREAWKMVVTHEPVFQTSFELDDTQEPSQRLIGAGIFIWEETTVTTYAAIEESLKSLPAATGLGSRFRVLHCVGPEFPRSESIFVWAVHHALIDGYSASLVFEKVDKALKDEPFESSHPFTLAAQDIAQMRDKIAPEVDHFWKDQETQYPGAAGEPLIPEALTDQSGMDFAEHVANVSIDSQRLRFAAQQAQATPAAIFYAAWALLLSSYTNSDTVIFGAVFSGRNLPFSWAPCMVGPLLNILPLRCRIEREVESASFVREIHQTIQDISRFQVADRPKNTPPFASTLTVQDSGLRSGTTAISSLRNPEVRESNLLPLTVVVENDGQITFLYRTDRFSESHVKDMAAIYTSLLDAFLDPGRNLQDCMNRRFPIEMNRTILQTGNIDSEISRVPSVNGGHTLSSLFGMVASLYPTHVAVQKGPHSVTYATLVQCAARVAAVVEQKTQPGEVVAILADRSINWIVGIMGATIANTVYCPLDSSYPAEYREDLLRRSHAKLFLVPSRSQLPTADNGVTAISIEGILASDIEPLCPWRTQKPSDGAYICFTSGSTGVPKGVLCQHQGVVSLQSCSIEGRLHSKPGRRIAQFMSTGFDVCVHEVFASLCYGGTLVLRKDDDDPFSHLADVDVVSMNATVAGSLDPSEYSDLDYVYLAGEPIPQRTADKWAVDRELYNAYGPTEATIIVTRTRLEAGVPVAIGQPFPSVRAYILNDHRELQPPNTLGNLFVAGVQVSHGYLDLPEVTAKSYFPDPFLPESFNERMYDTGDIGFWDTDGKIQCCGRKDRQVKVRGFRINLDGISNMATLRMPTIRHAAAFVKDGGVVLCVEPEDVDTGELRSRLKDALPPHAIPRTIYSIAHIPLSLNGKIDVKSLAAMEVRNGTVPTNGVIKTTHLEKLIAQEWQQLLGLDPAQPLSRSDDFVLLGGDSIRQLNLAARLRSVLGLPIKVKDIIRSSTLGDLVILVAQQQEQHGKKNAPNGAPAHSIVDRPLGFKNLSPPEMEWACKYRHSQSQSTFNVSYVARLSPAVDWQRLASAFETVLNRHRVLRSRFAVRRDGSNERVLSEYPISVKRTVHDVNIQEVINQPFEIDSSEALIHTIVSPSTLVLCISHILCDLTSINTLLYEVADTYHGLTLSPVVREYFDVTWHHTVDQEKQRFWAEYLEGLSFKKPNLASQIREPRSYRGTSRTTSLSDSLYRRLIISSTKNGFTFHQFGMAVAGLVLHFLTGRDDIVLGSPFVNRPSFEDRQVIGLFLEPLPVRISVKHQNENNGGPDAREFVQSVRQSSQSALAHSVPWSELMSHLGLPFPSAQPQLFSCCVTFHDDRGTEPPLAIQGVEGQYVSAEGAKFPLLFEWQATRASEHEQLTVRLEYDTDWLSAEFVEILEALLLECFRILLEEEDSHHGEVKERLGEVLRSEATRIGVGVNEICEMARQHLMVV.

Residues 13–406 (FSQRCCQNPD…GRRDRVTKIR (394 aa)) are adenylation 1. Positions 524–600 (SGPLTIGQAI…SLIEKSRHET (77 aa)) constitute a Carrier 1 domain. An O-(pantetheine 4'-phosphoryl)serine modification is found at S561. Residues 596-626 (SRHETEDTPDSSAFATRTPEESSMPTQGPVT) form a disordered region. Residues 605-624 (DSSAFATRTPEESSMPTQGP) show a composition bias toward polar residues. A condensation 1 region spans residues 624-1017 (PVTPLQKRMV…YTSLLDAFLD (394 aa)). Residues 1068–1446 (ASLYPTHVAV…GRKDRQVKVR (379 aa)) are adenylation 2. In terms of domain architecture, Carrier 2 spans 1544 to 1622 (IKTTHLEKLI…DLVILVAQQQ (79 aa)). S1582 is modified (O-(pantetheine 4'-phosphoryl)serine). A condensation 2 region spans residues 1663–2047 (SQSQSTFNVS…EALLLECFRI (385 aa)).

This sequence belongs to the NRP synthetase family. Pantetheine 4'-phosphate is required as a cofactor.

The enzyme catalyses L-tryptophan + L-alanine + 2 ATP = cyclo(L-tryptophyl-L-alanyl) + 2 ADP + 2 phosphate + 2 H(+). It participates in secondary metabolite biosynthesis. It functions in the pathway alkaloid biosynthesis. In terms of biological role, nonribosomal peptide synthetase; part of the gene cluster that mediates the biosynthesis of echinulin family alkaloid. The pathway begins with the biosynthesis of the cyclic dipeptide cyclo-L-Trp-L-Ala (cyclo-TA) by the NRPS echPS via condensation of L-alanine and L-tryptophan. The prenyltransferase echPT1 then catalyzes the first prenylation step, a reverse prenylation reaction at C2, to yield preechinulin. Preechinulin is the substrate of the cytochrome P450 monooxygenase echP450 that catalyzes the formation of the double bond between C10 and C11 to produce neoechulin A. The unique prenyltransferase echPT2 functions as a competitive enzyme with echP450 for preechinulin metabolization and uses preechinulin for effective regiospecific prenylations. Preechinulin is prenylated by echPT2 at C5 or C7. C7-prenylation leads to accumulation of tardioxopiperazine B without further modification by echPT2. In contrast, the C5-prenylated tardioxopiperazine A can be prenylated again by echPT2, predominantly at C7 to form echinulin or less frequently at C4 to give variecolorin L. EchPT2 also accepts neoechilunin A to produce varlecolorin G (prenylation at C5) or isoechinulin A (prenylation at C7). EchPT2 further converts isoechinulin A into dehydroechinulin. Moreover, a yet unidentified enzyme can also convert neoechilunin A into neoechilunin B by introducing a double bond between positions C14 and C17 and thus provides a further substrate to echPT2 for C5 and C7 prenylation. This Aspergillus ruber (strain CBS 135680) protein is Nonribosomal peptide synthetase echPS.